Here is a 790-residue protein sequence, read N- to C-terminus: Choline transporter-like 2 (790 aa).

The chain crosses the membrane as a helical span at residues 47–67; that stretch reads PCLFLFVTFLCAWGYVAYYAV. 2 N-linked (GlcNAc...) asparagine glycosylation sites follow: asparagine 102 and asparagine 259. Transmembrane regions (helical) follow at residues 288–308, 319–339, and 344–364; these read IITP…FQMI, ILVF…MLRW, and LVWI…YYSF. A glycan (N-linked (GlcNAc...) asparagine) is linked at asparagine 384. Transmembrane regions (helical) follow at residues 400–420 and 449–469; these read LWIL…VLVL and LVPW…LLFL. An N-linked (GlcNAc...) asparagine glycan is attached at asparagine 483. 4 helical membrane-spanning segments follow: residues 545 to 565, 592 to 612, 691 to 711, and 728 to 748; these read VIGF…VLAF, VYYH…CKII, VTGF…AAVT, and FVPA…FFSV.

Belongs to the CTL (choline transporter-like) family.

The protein resides in the membrane. This Anopheles gambiae (African malaria mosquito) protein is Choline transporter-like 2.